A 325-amino-acid chain; its full sequence is RNA ligase 1 (325 aa).

Requires Mg(2+) as cofactor. It depends on Mn(2+) as a cofactor. Post-translationally, AMPylates itself (auto-AMPylation).

The enzyme catalyses ATP + (ribonucleotide)n-3'-hydroxyl + 5'-phospho-(ribonucleotide)m = (ribonucleotide)n+m + AMP + diphosphate.. Functionally, functions as an RNA ligase, in vitro. The ligation reaction entails three nucleotidyl transfer steps. In the first step, the RNA ligase reacts with ATP in the absence of nucleic acid to form a covalent ligase-AMP intermediate and release pyrophosphate. In step 2, the ligase-AMP binds to the nucleic acid and transfers the adenylate to the 5'-PO4 terminus to form an adenylylated intermediate. In step 3, the RNA ligase directs the attack of the 3'-OH on the 5'-phosphoanhydride linkage, resulting in a repaired 3'-5' phosphodiester and release of AMP. Exhibits selectivity for single-stranded RNA substrates and may not have nick-sealing activity on double-stranded DNA-RNA hybrids. May play a role in maintaining RNA integrity under stress conditions, for example in response to reactive oxygen species (ROS). The sequence is that of RNA ligase 1 from Danio rerio (Zebrafish).